The sequence spans 261 residues: MIETYNQTSPRSAATGLPISMKIFMYLLTVFLITQMIGSALFAVYLHRRLDKIEDERNLHEDFVFMKTIQRCNTGERSLSLLNCEEIKSQFEGFVKDIMLNKEETKKENSFEMQKGDQNPQIAAHVISEASSKTTSVLQWAEKGYYTMSNNLVTLENGKQLTVKRQGLYYIYAQVTFCSNREASSQAPFIASLCLKSPGRFERILLRAANTHSSAKPCGQQSIHLGGVFELQPGASVFVNVTDPSQVSHGTGFTSFGLLKL.

Residues 1–22 lie on the Cytoplasmic side of the membrane; sequence MIETYNQTSPRSAATGLPISMK. Residues 23 to 46 form a helical; Signal-anchor for type II membrane protein membrane-spanning segment; the sequence is IFMYLLTVFLITQMIGSALFAVYL. Residues 47–261 lie on the Extracellular side of the membrane; the sequence is HRRLDKIEDE…GFTSFGLLKL (215 aa). Residues 122–261 form the THD domain; the sequence is IAAHVISEAS…GFTSFGLLKL (140 aa). Cysteines 178 and 218 form a disulfide. N240 carries N-linked (GlcNAc...) (complex) asparagine; alternate glycosylation. The N-linked (GlcNAc...) (high mannose) asparagine; alternate glycan is linked to N240.

The protein belongs to the tumor necrosis factor family. As to quaternary structure, homotrimer. Interacts with isoform 3 of CD28. CD40 ligand, soluble form: Exists as either a monomer or a homotrimer. Forms a ternary complex between CD40 and integrins for CD40-CD40LG signaling. Post-translationally, the soluble form derives from the membrane form by proteolytic processing. In terms of processing, N-linked glycan is a mixture of high mannose and complex type. Glycan structure does not influence binding affinity to CD40. Not O-glycosylated. As to expression, specifically expressed on activated CD4+ T-lymphocytes.

Its subcellular location is the cell membrane. The protein localises to the cell surface. It localises to the secreted. In terms of biological role, cytokine that acts as a ligand to CD40/TNFRSF5. Costimulates T-cell proliferation and cytokine production. Its cross-linking on T-cells generates a costimulatory signal which enhances the production of IL4 and IL10 in conjunction with the TCR/CD3 ligation and CD28 costimulation. Induces the activation of NF-kappa-B. Induces the activation of kinases MAPK8 and PAK2 in T-cells. Induces tyrosine phosphorylation of isoform 3 of CD28. Mediates B-cell proliferation in the absence of co-stimulus as well as IgE production in the presence of IL4. Involved in immunoglobulin class switching. Its function is as follows. Acts as a ligand for integrins, specifically ITGA5:ITGB1 and ITGAV:ITGB3; both integrins and the CD40 receptor are required for activation of CD40-CD40LG signaling, which have cell-type dependent effects, such as B-cell activation, NF-kappa-B signaling and anti-apoptotic signaling. The chain is CD40 ligand (CD40LG) from Homo sapiens (Human).